Here is a 143-residue protein sequence, read N- to C-terminus: Nucleoside diphosphate kinase (143 aa).

ATP contacts are provided by Lys11, Phe59, Arg87, Thr93, Arg104, and Asn114. The active-site Pros-phosphohistidine intermediate is His117.

It belongs to the NDK family. In terms of assembly, homotetramer. It depends on Mg(2+) as a cofactor.

It is found in the cytoplasm. It carries out the reaction a 2'-deoxyribonucleoside 5'-diphosphate + ATP = a 2'-deoxyribonucleoside 5'-triphosphate + ADP. It catalyses the reaction a ribonucleoside 5'-diphosphate + ATP = a ribonucleoside 5'-triphosphate + ADP. Major role in the synthesis of nucleoside triphosphates other than ATP. The ATP gamma phosphate is transferred to the NDP beta phosphate via a ping-pong mechanism, using a phosphorylated active-site intermediate. The polypeptide is Nucleoside diphosphate kinase (Nitrosococcus oceani (strain ATCC 19707 / BCRC 17464 / JCM 30415 / NCIMB 11848 / C-107)).